Reading from the N-terminus, the 527-residue chain is Neutrophil cytosol factor 2 (527 aa).

TPR repeat units lie at residues 37–70, 71–104, and 121–154; these read SRIC…DKHL, AVSY…LRGN, and CEVL…KSEP. Threonine 233 carries the phosphothreonine modification. The SH3 1 domain occupies 240-299; it reads LEGEAHRVLFGFVPETPEELQVMPGNIVFVLKKGNDNWATVMFNGQKGLVPCNYLEPVEL. The tract at residues 304 to 345 is disordered; the sequence is QQQPQEETSLESDIPAPPSSSAPGRPQLSPGQKGKEEPKQEI. The residue at position 324 (serine 324) is a Phosphoserine. Residues 336–345 are compositionally biased toward basic and acidic residues; that stretch reads KGKEEPKQEI. Residues 352–430 enclose the PB1 domain; it reads SYTLKVHYKY…YCLTLWCENT (79 aa). The residue at position 400 (serine 400) is a Phosphoserine. Residues 434–457 form a disordered region; the sequence is QGFPDEPEESKKSDANNQTTEPEL. In terms of domain architecture, SH3 2 spans 458 to 517; sequence KEGSKVVALFSYEATQPEDLEFLEGDVILVISTVNEQWLEGECKGKVGIFPKAFVEQHPT.

The protein belongs to the NCF2/NOXA1 family. In terms of assembly, component of the phagocyte NADPH oxidase complex composed of an obligatory core heterodimer formed by the membrane proteins CYBA and CYBB and the cytosolic regulatory subunits NCF1/p47-phox, NCF2/p67-phox, NCF4/p40-phox and the small GTPase RAC1 or RAC2. Part of a cytosolic complex composed at least by NCF1, NCF2 and NCF4. Interacts with NCF4. Interacts (via the C-terminal SH3 domain) with NCF1 (via C-terminus). Interacts with SYTL1 and RAC1. May interact with NOXO1. Interacts with S100A8 and calprotectin (S100A8/9). Interacts with GBP7 (via GB1/RHD3-type G domain). Interacts with CYBB; the interaction is enhanced in the presence of GBP7.

The protein localises to the cytoplasm. Subunit of the phagocyte NADPH oxidase complex that mediates the transfer of electrons from cytosolic NADPH to O2 to produce the superoxide anion (O2(-)). In the activated complex, electrons are first transferred from NADPH to flavin adenine dinucleotide (FAD) and subsequently transferred via two heme molecules to molecular oxygen, producing superoxide through an outer-sphere reaction. Activation of the NADPH oxidase complex is initiated by the assembly of cytosolic subunits of the NADPH oxidase complex with the core NADPH oxidase complex to form a complex at the plasma membrane or phagosomal membrane. This activation process is initiated by phosphorylation dependent binding of the cytosolic NCF1/p47-phox subunit to the C-terminus of CYBA/p22-phox. This chain is Neutrophil cytosol factor 2, found in Bos taurus (Bovine).